Reading from the N-terminus, the 433-residue chain is 3-phosphoshikimate 1-carboxyvinyltransferase (433 aa).

K23, S24, and R28 together coordinate 3-phosphoshikimate. K23 is a phosphoenolpyruvate binding site. The phosphoenolpyruvate site is built by G95 and R123. 3-phosphoshikimate contacts are provided by S170, S171, Q172, S198, D317, and K344. Q172 is a phosphoenolpyruvate binding site. D317 functions as the Proton acceptor in the catalytic mechanism. Phosphoenolpyruvate contacts are provided by R348, R391, and K416.

This sequence belongs to the EPSP synthase family. As to quaternary structure, monomer.

The protein resides in the cytoplasm. It catalyses the reaction 3-phosphoshikimate + phosphoenolpyruvate = 5-O-(1-carboxyvinyl)-3-phosphoshikimate + phosphate. The protein operates within metabolic intermediate biosynthesis; chorismate biosynthesis; chorismate from D-erythrose 4-phosphate and phosphoenolpyruvate: step 6/7. Catalyzes the transfer of the enolpyruvyl moiety of phosphoenolpyruvate (PEP) to the 5-hydroxyl of shikimate-3-phosphate (S3P) to produce enolpyruvyl shikimate-3-phosphate and inorganic phosphate. This chain is 3-phosphoshikimate 1-carboxyvinyltransferase, found in Neisseria meningitidis serogroup C / serotype 2a (strain ATCC 700532 / DSM 15464 / FAM18).